A 284-amino-acid polypeptide reads, in one-letter code: Shikimate dehydrogenase (NADP(+)) (284 aa).

Shikimate contacts are provided by residues 20-22 (SIS) and serine 67. Lysine 71 serves as the catalytic Proton acceptor. Aspartate 83 is an NADP(+) binding site. Shikimate is bound by residues asparagine 92 and aspartate 107. NADP(+) contacts are provided by residues 129–133 (GAGGA) and isoleucine 227. Tyrosine 229 lines the shikimate pocket. Glycine 250 is a binding site for NADP(+).

It belongs to the shikimate dehydrogenase family. Homodimer.

It catalyses the reaction shikimate + NADP(+) = 3-dehydroshikimate + NADPH + H(+). Its pathway is metabolic intermediate biosynthesis; chorismate biosynthesis; chorismate from D-erythrose 4-phosphate and phosphoenolpyruvate: step 4/7. Involved in the biosynthesis of the chorismate, which leads to the biosynthesis of aromatic amino acids. Catalyzes the reversible NADPH linked reduction of 3-dehydroshikimate (DHSA) to yield shikimate (SA). In Streptococcus pneumoniae (strain CGSP14), this protein is Shikimate dehydrogenase (NADP(+)).